The primary structure comprises 216 residues: DNA-binding protein HupB (216 aa).

Residue glycine 2 is a propeptide, removed; alternate. At methionine 3 the chain carries N-acetylmethionine. The tract at residues 3–92 (MNKAELIDVL…PGAQFKAVVS (90 aa)) is bacterial histone-like domain. An N6-acetyllysine mark is found at lysine 5, lysine 74, lysine 88, lysine 105, lysine 118, and lysine 135. Residues 102–216 (PAVKRGVGAS…KKATARRGRK (115 aa)) form a disordered region. The segment at 103–216 (AVKRGVGASA…KKATARRGRK (114 aa)) is degenerate repeats region. Positions 104 to 114 (VKRGVGASAAK) are enriched in low complexity. Basic residues predominate over residues 115–216 (KVAKKAPAKK…KKATARRGRK (102 aa)). Lysine 140 carries the post-translational modification N6,N6,N6-trimethyllysine. 2 positions are modified to N6-acetyllysine: lysine 148 and lysine 169.

It belongs to the bacterial histone-like protein family. Long actinobacterial subfamily. Oligomerizes. Interacts with topoisomerase 1 (topA). Interacts with Eis. Interacts with antigen 85 proteins (fbpA, fbpB, fbpC). Post-translationally, probably acetylated by Eis in vivo. In vitro acetylated by Eis (strain H37Rv and H37Ra) on many more residues than those identified in vivo. Deacetylated in vitro by NAD-dependent protein deacylase (Rv1151c). In terms of processing, trimethylated on Lys-140 by human SUV39H1; trimethylation inhibits mycobacterial growth. SUV39H1 probably also trimethylates another residue. Probably succinylated by Rv0802c and desuccinylated by NAD-dependent protein deacylase (Rv1151c).

It is found in the cytoplasm. The protein localises to the nucleoid. It localises to the secreted. The protein resides in the cell wall. The enzyme catalyses 4 Fe(2+) + O2 + 4 H(+) = 4 Fe(3+) + 2 H2O. Its function is as follows. A nucleoid-associated protein (NAP) that probably plays a role in chromosome compactation. Binds DNA non-specifically, with greater affinity for supercoiled than linear DNA, binds well to nicked DNA, gapped and cruciform DNA. Has a preference for A:T rich DNA. Required for activation of the mtbB operon. Binds the mtbB promoter in the presence of iron, binding is seen with as little as 25 uM Fe(2+) and increases with increasing Fe(2+). RNase E and HupB jointly contribute to cellular adaptation to changing growth conditions and survival during antibiotic treatment and in the host. Plays a role in stress survival. Stimulates supercoiling relaxation by topoisomerase 1 (Top1, topA). In terms of biological role, binds Fe(3+) but not Fe(2+). Has ferroxidase activity, converts Fe(2+) into Fe(3+) and in the presence of H(2)O(2) prevents the generation of hydroxyl radicals (the Fenton reaction). Protects DNA from damage in the presence of FeSO(4) and H(2)O(2). May function in iron storage. Involved in iron uptake by bacteria (either Fe(3+) or extracellular carboxymycobactin); antibodies against HupB block uptake of both. Following uptake iron is mostly found in the iron siderophores carboxymycobactin (CMb, extracellular) or mycobactin (Mb, lipophilic). Facilitates transfer of iron from CMb to Mb when liposomes plus a cell wall lysate are incubated with CMb. Binds iron, ferri-CMb and ferri-Mb; has 10-fold higher affinity for ferri-Mb. Suggested to transfer iron from CBm to Mb at the cell membrane. Required for biofilm formation; trimethylation by recombinant human SUV39H1 (a histone methyltransferase) inhibits biofilm formation. Induces lymphoproliferation, particularly in health tuberculin reactors, and is immunogenic. Maybe involved in pathogenesis of inflammatory bowel disease (IBD) in patients with ulcerative colitis and Crohn disease (CD). Bound by anti-neutrophil cytoplasmic antibodies (pANCA), which are a hallmark of IBD. The binding is due to pANCA directed against H1-3 cross-reacting with DBH epitopes. In CD, target of a strong IgA response. Functionally, may play a role in cell wall assembly. In vitro at low levels enhances formation of TMM and TDM by antigen 85 proteins (fbpA, fbpB, fbpC), at higher levels inhibits TMM and TDM formation. This Mycobacterium tuberculosis (strain ATCC 25618 / H37Rv) protein is DNA-binding protein HupB.